The primary structure comprises 471 residues: uncharacterized protein (471 aa).

Helical transmembrane passes span 48–68 (FISA…FTIV), 85–105 (LSGV…YPML), 123–140 (YTMS…YALA), 145–165 (SVAL…MFLY), 186–206 (VVNS…GGLM), 223–243 (SGNW…FACF), 277–297 (FVGC…YFLL), 320–340 (GNFL…FSYL), 349–369 (IILL…TIHY), 379–399 (FIIY…SVSL), 414–434 (VAVQ…GGAF), and 440–460 (VVFF…LLII).

It belongs to the major facilitator superfamily.

It localises to the golgi apparatus. The protein localises to the membrane. This is an uncharacterized protein from Schizosaccharomyces pombe (strain 972 / ATCC 24843) (Fission yeast).